Consider the following 193-residue polypeptide: NAD(P)H-quinone oxidoreductase subunit I (193 aa).

2 4Fe-4S ferredoxin-type domains span residues glycine 55–glutamate 84 and lysine 95–glutamate 124. [4Fe-4S] cluster-binding residues include cysteine 64, cysteine 67, cysteine 70, cysteine 74, cysteine 104, cysteine 107, cysteine 110, and cysteine 114. The disordered stretch occupies residues leucine 169 to aspartate 193.

It belongs to the complex I 23 kDa subunit family. NDH-1 is composed of at least 11 different subunits. The cofactor is [4Fe-4S] cluster.

It localises to the cellular thylakoid membrane. It catalyses the reaction a plastoquinone + NADH + (n+1) H(+)(in) = a plastoquinol + NAD(+) + n H(+)(out). It carries out the reaction a plastoquinone + NADPH + (n+1) H(+)(in) = a plastoquinol + NADP(+) + n H(+)(out). Its function is as follows. NDH-1 shuttles electrons from an unknown electron donor, via FMN and iron-sulfur (Fe-S) centers, to quinones in the respiratory and/or the photosynthetic chain. The immediate electron acceptor for the enzyme in this species is believed to be plastoquinone. Couples the redox reaction to proton translocation, and thus conserves the redox energy in a proton gradient. This is NAD(P)H-quinone oxidoreductase subunit I from Rippkaea orientalis (strain PCC 8801 / RF-1) (Cyanothece sp. (strain PCC 8801)).